A 469-amino-acid polypeptide reads, in one-letter code: Probable indole-3-acetic acid-amido synthetase GH3.13 (469 aa).

The disordered stretch occupies residues 1–26 (MTSTSSENAPDHDHDHDASSPAPATA). The span at 9–18 (APDHDHDHDA) shows a compositional bias: basic and acidic residues.

Belongs to the IAA-amido conjugating enzyme family.

Its function is as follows. May catalyze the synthesis of indole-3-acetic acid (IAA)-amino acid conjugates, providing a mechanism for the plant to cope with the presence of excess auxin. This Oryza sativa subsp. japonica (Rice) protein is Probable indole-3-acetic acid-amido synthetase GH3.13 (GH3.13).